The primary structure comprises 263 residues: Cell division protein DivIB (263 aa).

Topologically, residues 1-32 are cytoplasmic; it reads MNPGQDREKIVNIEERIPKIKEQRKQKANRRL. A helical membrane pass occupies residues 33–53; sequence ISFIMLFFIMVLIIVYLQTPI. Residues 51 to 123 form an alpha region; the sequence is TPISKVSTIS…NKINIAIEEY (73 aa). Positions 54–123 constitute a POTRA domain; it reads SKVSTISVTG…NKINIAIEEY (70 aa). At 54-263 the chain is on the extracellular side; it reads SKVSTISVTG…DKAAKKEDEN (210 aa). Residues 124–251 are beta; that stretch reads KAIAYLEKDD…EVATYFEEFG (128 aa). The tract at residues 229–263 is gamma; sequence SQLSSNKKGIIHLEVATYFEEFGKNDKAAKKEDEN.

The protein belongs to the FtsQ/DivIB family. DivIB subfamily. In terms of assembly, interacts with FtsL, DivIC and PBP-2B.

It is found in the cell membrane. Cell division protein that may be involved in stabilizing or promoting the assembly of the division complex. Plays an essential role in division at high temperatures, maybe by protecting FtsL from degradation or by promoting formation of the FtsL-DivIC complex. May modulate the transpeptidase activity of PBP-2B. Also required for efficient sporulation at all temperatures. Could be directly involved in the engulfment process or be required to form a sporulation septum competent for engulfment. Influences the Spo0J/Soj system of chromosome segregation. The polypeptide is Cell division protein DivIB (Bacillus subtilis (strain 168)).